We begin with the raw amino-acid sequence, 325 residues long: Acetyl-coenzyme A carboxylase carboxyl transferase subunit alpha (325 aa).

Positions 35–292 (EINKLEARLE…DDVLKRSLRE (258 aa)) constitute a CoA carboxyltransferase C-terminal domain.

It belongs to the AccA family. As to quaternary structure, acetyl-CoA carboxylase is a heterohexamer composed of biotin carboxyl carrier protein (AccB), biotin carboxylase (AccC) and two subunits each of ACCase subunit alpha (AccA) and ACCase subunit beta (AccD).

Its subcellular location is the cytoplasm. The enzyme catalyses N(6)-carboxybiotinyl-L-lysyl-[protein] + acetyl-CoA = N(6)-biotinyl-L-lysyl-[protein] + malonyl-CoA. It participates in lipid metabolism; malonyl-CoA biosynthesis; malonyl-CoA from acetyl-CoA: step 1/1. In terms of biological role, component of the acetyl coenzyme A carboxylase (ACC) complex. First, biotin carboxylase catalyzes the carboxylation of biotin on its carrier protein (BCCP) and then the CO(2) group is transferred by the carboxyltransferase to acetyl-CoA to form malonyl-CoA. This chain is Acetyl-coenzyme A carboxylase carboxyl transferase subunit alpha, found in Anoxybacillus flavithermus (strain DSM 21510 / WK1).